The following is a 621-amino-acid chain: Altered inheritance of mitochondria protein 9, mitochondrial (621 aa).

A mitochondrion-targeting transit peptide spans 1–40 (MIRSTTAKLGKRCATLRVRASPILRPLVATRCITNKADEV).

It belongs to the AIM9 family.

It is found in the mitochondrion. This chain is Altered inheritance of mitochondria protein 9, mitochondrial (AIM9), found in Zygosaccharomyces rouxii (strain ATCC 2623 / CBS 732 / NBRC 1130 / NCYC 568 / NRRL Y-229).